We begin with the raw amino-acid sequence, 634 residues long: Probable potassium transport system protein Kup 2 (634 aa).

Transmembrane regions (helical) follow at residues 20 to 40 (FWTLALGSIGVVYGDIGTSPL), 64 to 84 (VLSLMLWTLLIIVTLKYVLLI), 110 to 130 (FAAISLLGMAGAALFYGDAII), 148 to 168 (PGFDPYILPLSMAILVGLFLV), 174 to 194 (AAVATWFGPLMLIWFGLMAVA), 224 to 244 (AGLLALGAVFLTVTGAEALYA), 258 to 278 (WLVLVFPALALCYLGQGAMLL), 290 to 310 (LLFPDWALLPMVWIATGATII), 348 to 368 (IYIPRANWLLLIAVLYLVFAF), 377 to 397 (AYGIAVTGTMVLTSIMAFFVM), 405 to 425 (AAVATAIIVPFLIIDLIFLMA), and 430 to 450 (IVDGGWIPLMIGVGLMGVMVT).

It belongs to the HAK/KUP transporter (TC 2.A.72) family.

It localises to the cell inner membrane. It carries out the reaction K(+)(in) + H(+)(in) = K(+)(out) + H(+)(out). Transport of potassium into the cell. Likely operates as a K(+):H(+) symporter. This Rhodopseudomonas palustris (strain ATCC BAA-98 / CGA009) protein is Probable potassium transport system protein Kup 2.